The chain runs to 586 residues: Phosphatidylinositol-3-phosphatase SAC1-B (586 aa).

The Cytoplasmic segment spans residues M1–K519. The 330-residue stretch at L121–G450 folds into the SAC domain. The interval T451–D586 is essential for phosphatidylinositol-4-phosphate phosphatase activity. A helical membrane pass occupies residues F520 to M540. The Lumenal segment spans residues A541–E547. Residues T548 to F568 traverse the membrane as a helical segment. The Cytoplasmic portion of the chain corresponds to N569–D586.

The protein localises to the endoplasmic reticulum membrane. Its subcellular location is the golgi apparatus membrane. It catalyses the reaction a 1,2-diacyl-sn-glycero-3-phospho-(1D-myo-inositol-3-phosphate) + H2O = a 1,2-diacyl-sn-glycero-3-phospho-(1D-myo-inositol) + phosphate. The catalysed reaction is a 1,2-diacyl-sn-glycero-3-phospho-(1D-myo-inositol 4-phosphate) + H2O = a 1,2-diacyl-sn-glycero-3-phospho-(1D-myo-inositol) + phosphate. Phosphoinositide phosphatase which catalyzes the hydrolysis of phosphatidylinositol 4-phosphate (PtdIns(4)P), phosphatidylinositol 3-phosphate (PtdIns(3)P) and has low activity towards phosphatidylinositol-3,5-bisphosphate (PtdIns(3,5)P2). This Danio rerio (Zebrafish) protein is Phosphatidylinositol-3-phosphatase SAC1-B (sacm1lb).